The following is a 412-amino-acid chain: Inositol polyphosphate-5-phosphatase A (412 aa).

Cys409 carries S-farnesyl cysteine lipidation. Residues Val410 to Gln412 constitute a propeptide, removed in mature form.

The protein belongs to the inositol 1,4,5-trisphosphate 5-phosphatase type I family. In terms of assembly, interacts with TASOR. In terms of processing, isoprenylation at Cys-409 is required for localization at the membrane. As to expression, predominantly expressed in heart, brain, and skeletal muscle. In brain; high level in Purkinje cells.

It is found in the cell membrane. It localises to the cell projection. The protein localises to the dendrite. It carries out the reaction 1D-myo-inositol 1,4,5-trisphosphate + H2O = 1D-myo-inositol 1,4-bisphosphate + phosphate. The enzyme catalyses 1D-myo-inositol 1,3,4,5-tetrakisphosphate + H2O = 1D-myo-inositol 1,3,4-trisphosphate + phosphate. Its function is as follows. Phosphatase that specifically hydrolyzes the 5-phosphate of inositol 1,4,5-trisphosphate to inositol 1,4-bisphosphate, and inositol 1,3,4,5-tetrasphosphate to inositol 1,3,4-trisphosphate. Plays a crucial role in the survival of cerebellar Purkinje cells. The polypeptide is Inositol polyphosphate-5-phosphatase A (Homo sapiens (Human)).